Reading from the N-terminus, the 113-residue chain is UPF0122 protein PEPE_0845 (113 aa).

The protein belongs to the UPF0122 family.

Functionally, might take part in the signal recognition particle (SRP) pathway. This is inferred from the conservation of its genetic proximity to ftsY/ffh. May be a regulatory protein. This Pediococcus pentosaceus (strain ATCC 25745 / CCUG 21536 / LMG 10740 / 183-1w) protein is UPF0122 protein PEPE_0845.